The sequence spans 299 residues: Tyrosine recombinase XerC (299 aa).

Residues 1-85 enclose the Core-binding (CB) domain; that stretch reads MERQLEAYCA…AVRGLYRYLN (85 aa). Positions 106–285 constitute a Tyr recombinase domain; sequence RLPKTLDTDR…DFQHLAAVYD (180 aa). Catalysis depends on residues R146, K170, H237, R240, and H263. The active-site O-(3'-phospho-DNA)-tyrosine intermediate is the Y272.

It belongs to the 'phage' integrase family. XerC subfamily. In terms of assembly, forms a cyclic heterotetrameric complex composed of two molecules of XerC and two molecules of XerD.

Its subcellular location is the cytoplasm. Site-specific tyrosine recombinase, which acts by catalyzing the cutting and rejoining of the recombining DNA molecules. The XerC-XerD complex is essential to convert dimers of the bacterial chromosome into monomers to permit their segregation at cell division. It also contributes to the segregational stability of plasmids. This chain is Tyrosine recombinase XerC, found in Pseudomonas entomophila (strain L48).